The sequence spans 288 residues: Geranylgeranyl diphosphate synthase (288 aa).

2 residues coordinate isopentenyl diphosphate: arginine 43 and histidine 73. Mg(2+) contacts are provided by aspartate 80 and aspartate 86. Residue arginine 91 coordinates (2E,6E)-farnesyl diphosphate. Arginine 92 serves as a coordination point for isopentenyl diphosphate. (2E,6E)-farnesyl diphosphate-binding residues include lysine 170, threonine 171, and glutamine 205.

It belongs to the FPP/GGPP synthase family. It depends on Mg(2+) as a cofactor.

The catalysed reaction is isopentenyl diphosphate + (2E,6E)-farnesyl diphosphate = (2E,6E,10E)-geranylgeranyl diphosphate + diphosphate. Its pathway is isoprenoid biosynthesis; geranylgeranyl diphosphate biosynthesis; geranylgeranyl diphosphate from farnesyl diphosphate and isopentenyl diphosphate: step 1/1. In terms of biological role, catalyzes the condensation of farnesyl diphosphate (FPP) and isopentenyl diphosphate (IPP) to yield geranylgeranyl diphosphate (GGPP) needed for biosynthesis of carotenoids and diterpenes. The sequence is that of Geranylgeranyl diphosphate synthase (crtE) from Cereibacter sphaeroides (strain ATCC 17023 / DSM 158 / JCM 6121 / CCUG 31486 / LMG 2827 / NBRC 12203 / NCIMB 8253 / ATH 2.4.1.) (Rhodobacter sphaeroides).